A 132-amino-acid chain; its full sequence is Small ribosomal subunit protein uS15 (132 aa).

Belongs to the universal ribosomal protein uS15 family. Part of the 30S ribosomal subunit.

The sequence is that of Small ribosomal subunit protein uS15 from Methanobrevibacter smithii (strain ATCC 35061 / DSM 861 / OCM 144 / PS).